The following is an 875-amino-acid chain: Probable ATP-dependent RNA helicase DDX10 (875 aa).

The disordered stretch occupies residues 1-44; the sequence is MGKTVASLGQGTRPDPVRSFNRWKKKHSHRQHQKKERRKQLKKP. A Phosphothreonine modification is found at Thr-4. Ser-7 is subject to Phosphoserine. Residues 21–41 show a composition bias toward basic residues; it reads NRWKKKHSHRQHQKKERRKQL. Residues 69–97 carry the Q motif motif; that stretch reads TRFSDFPLSKKTLKGLQEAQYRLVTEIQK. ATP is bound by residues 89-91, Gln-96, and 113-120; these read YRL and AKTGSGKT. Positions 100-274 constitute a Helicase ATP-binding domain; that stretch reads IGLALQGKDV…RLSLKDPEYV (175 aa). Residues 222–225 carry the DEAD box motif; sequence DEAD. The Helicase C-terminal domain maps to 300-449; sequence KISVLFSFLR…EIKINPEKLI (150 aa). Residues 525-612 are disordered; it reads LVKNPVTEAV…HTESVVSIEE (88 aa). At Ser-540 the chain carries Phosphoserine. Lys-556 carries the post-translational modification N6-acetyllysine. A compositionally biased stretch (basic and acidic residues) spans 562 to 575; sequence KSGERLEETEHRLA. A compositionally biased stretch (acidic residues) spans 578–593; it reads DGDEEQDEETEDEETE. A Phosphothreonine modification is found at Thr-587. Basic and acidic residues predominate over residues 594-604; that stretch reads DHLGKAREPHT. Lys-652 is covalently cross-linked (Glycyl lysine isopeptide (Lys-Gly) (interchain with G-Cter in SUMO2)). Positions 734–744 are enriched in basic and acidic residues; sequence EEDKFDKEEYR. The disordered stretch occupies residues 734–860; that stretch reads EEDKFDKEEY…VEPLDTGLSL (127 aa). Basic residues predominate over residues 745–754; it reads KKIKAKHRER. Positions 755 to 774 are enriched in basic and acidic residues; sequence RLKEREARREANKRQAKARD. Over residues 775 to 789 the composition is skewed to acidic residues; sequence EEEAFLDWSDEDDGG. A Phosphoserine modification is found at Ser-783. The segment covering 797–831 has biased composition (basic and acidic residues); it reads DPDKHRSSEESESEDTNHKMSDTKKKQETRKRNNT.

The protein belongs to the DEAD box helicase family. DDX10/DBP4 subfamily. Interacts with AIM2; this interaction promotes AIM2 stability. Interacts with SCNA; this interaction causes DDX10 mislocalization to the nucleoplasm and cytoplasmic inclusions.

It localises to the cytoplasm. Its subcellular location is the nucleus. It is found in the nucleolus. It catalyses the reaction ATP + H2O = ADP + phosphate + H(+). In terms of biological role, putative ATP-dependent RNA helicase that plays various role in innate immunity or inflammation. Plays a role in the enhancement of AIM2-induced inflammasome activation by interacting with AIM2 and stabilizing its protein level. Negatively regulates viral infection by promoting interferon beta production and interferon stimulated genes/ISGs expression. In Mus musculus (Mouse), this protein is Probable ATP-dependent RNA helicase DDX10 (Ddx10).